A 362-amino-acid polypeptide reads, in one-letter code: Serpentine receptor class delta-2 (362 aa).

Transmembrane regions (helical) follow at residues 27-47, 57-77, 104-124, 144-164, 209-229, 264-284, and 292-312; these read LSCLICLPGALCNAILIYLIW, YAIYILNFALFDFATCIISFF, FCYFCHCFMCHALAHSQWILL, LIRNSVALYSMSLCFLLVYVF, LISILYMTIPCVPIYCAILYF, GIPIFWLVASGIFTMSQFGII, and ITFRLMDCIPLISPIVTIIFV.

It belongs to the nematode receptor-like protein srd family.

Its subcellular location is the membrane. Functionally, thought to be a chemosensory receptor. This is Serpentine receptor class delta-2 (srd-2) from Caenorhabditis elegans.